A 61-amino-acid chain; its full sequence is Metallothionein-1E (61 aa).

Met1 carries the N-acetylmethionine modification. The interval 1–29 (MDPNCSCPTGGSCSCAGSCTCKACRCTSC) is beta. 20 residues coordinate a divalent metal cation: Cys5, Cys7, Cys13, Cys15, Cys19, Cys21, Cys24, Cys26, Cys29, Cys33, Cys34, Cys36, Cys37, Cys41, Cys44, Cys48, Cys50, Cys57, Cys59, and Cys60. Residues 30–61 (KKSCCSCCPVGCAKCAQGCICKGASDKCSCCA) are alpha.

The protein belongs to the metallothionein superfamily. Type 1 family. As to quaternary structure, monomer.

In terms of biological role, metallothioneins have a high content of cysteine residues that bind various heavy metals; these proteins are transcriptionally regulated by both heavy metals and glucocorticoids. The chain is Metallothionein-1E (MT1E) from Sus scrofa (Pig).